The following is a 591-amino-acid chain: MLMMVIRIYIHKRLNAKDYNNFYTSIGDFGYTIPGSDAPQYNIESDSEHYLNFGIAHINFNNGTNNQITNPNPEVYTRFYIQMKTPDGQDRIVYEAENANAISFLIRSTYHKPMSGLVGGFRFDPLLGIRVYKDSFVLADELARIQSEFTTVYGNSGINVTENTTNYSVRMYWESAVVVEPGEPSPENPIPWLSNLPNITDGNPENIDGQWGNVTGFNYNPTTKLFNADVIYDGNSYPIRDAVVASNDDSFLTRTEKAYYFTQGGQKFLYLNFSKDIDSFMFKNHYSELKNWVGHALWNLSTGEVNVMEQLKVFQYLKFTEDNELMAYFYIVDTPVDDLISVTSNVAYRYWKPTWFGLGPKEPGPIQNKIITAAQGEFNSIRPTWVKPVYLGSYFAGASGLVIAGSALIKGGSPWFGLGLAGVGILAGGILQYADDNEWLNYDIAQVQKLEPNVNIRSEISEAYFNAYGQMFPSTLGQSLYRISYGQFDQSDLQVISDKSDVITVVFETDGITHTYQKDQIDDTWDGPATEIPLGVDGILPEWALWLITIVIGLFALSNLQKIFDTIKKKPIISIIVVIAILYALTYFNLL.

4 helical membrane passes run 389–409 (VYLGSYFAGASGLVIAGSALI), 411–431 (GGSPWFGLGLAGVGILAGGIL), 538–558 (GILPEWALWLITIVIGLFALS), and 571–591 (PIISIIVVIAILYALTYFNLL).

The protein resides in the membrane. This is an uncharacterized protein from Mycoplasma (Bacteriophage L2).